A 101-amino-acid chain; its full sequence is STAS-domain containing protein PA14_20770 (101 aa).

The region spanning 14 to 101 is the STAS domain; that stretch reads LTIQIQGRFD…SNFEQLFKIS (88 aa).

Phosphorylated on a serine residue, possibly on Ser-56.

The protein resides in the secreted. The chain is STAS-domain containing protein PA14_20770 from Pseudomonas aeruginosa (strain UCBPP-PA14).